We begin with the raw amino-acid sequence, 62 residues long: Antitoxin VbhA (62 aa).

The Inhibitory (S/T)XXXE(G/N) motif signature appears at 20–25 (SQRLEG). Glu-24 serves as a coordination point for ATP.

Interacts with VbhT.

Functionally, antitoxin component of type II toxin-antitoxin (TA) system VbhT-VbhA. Acts by inhibiting the adenylyltransferase activity of VbhT; competes with ATP-binding and prevents productive ATP-binding to VbhT. The chain is Antitoxin VbhA from Bartonella schoenbuchensis (strain DSM 13525 / NCTC 13165 / R1).